A 387-amino-acid polypeptide reads, in one-letter code: Probable multidrug resistance protein EmrK (387 aa).

Residues 1 to 16 (MEQINSNKKHSNRRKY) are Cytoplasmic-facing. The chain crosses the membrane as a helical span at residues 17 to 37 (FSLLAVVLFIAFSGAYAYWSM). The Periplasmic segment spans residues 38 to 387 (ELEDMISTDD…SNIISHNGQL (350 aa)).

Belongs to the membrane fusion protein (MFP) (TC 8.A.1) family. In terms of assembly, part of the tripartite efflux system EmrYK-TolC, which is composed of an inner membrane transporter, EmrY, a membrane fusion protein, EmrK, and an outer membrane component, TolC. The complex forms a large protein conduit and can translocate molecules across both the inner and outer membranes.

It is found in the cell inner membrane. In terms of biological role, part of the tripartite efflux system EmrYK-TolC, which confers resistance to various drugs. In Escherichia coli (strain K12), this protein is Probable multidrug resistance protein EmrK (emrK).